A 78-amino-acid polypeptide reads, in one-letter code: Small ribosomal subunit protein bS18A (78 aa).

Belongs to the bacterial ribosomal protein bS18 family. In terms of assembly, part of the 30S ribosomal subunit. Forms a tight heterodimer with protein bS6.

In terms of biological role, binds as a heterodimer with protein bS6 to the central domain of the 16S rRNA, where it helps stabilize the platform of the 30S subunit. The chain is Small ribosomal subunit protein bS18A from Streptomyces avermitilis (strain ATCC 31267 / DSM 46492 / JCM 5070 / NBRC 14893 / NCIMB 12804 / NRRL 8165 / MA-4680).